Here is a 99-residue protein sequence, read N- to C-terminus: Beta-2-microglobulin (99 aa).

The 89-residue stretch at 5 to 93 (PRVQVYSRHP…HITLSEPKIV (89 aa)) folds into the Ig-like C1-type domain. Cysteine 25 and cysteine 80 form a disulfide bridge.

It belongs to the beta-2-microglobulin family. In terms of assembly, heterodimer of an alpha chain and a beta chain. Beta-2-microglobulin is the beta-chain of major histocompatibility complex class I molecules.

The protein localises to the secreted. In terms of biological role, component of the class I major histocompatibility complex (MHC). Involved in the presentation of peptide antigens to the immune system. In Cavia porcellus (Guinea pig), this protein is Beta-2-microglobulin (B2M).